The sequence spans 349 residues: uncharacterized protein (349 aa).

A helical transmembrane segment spans residues 221–241 (AFVVWIGSGLNIIWWTGIVLL). Residues 328–339 (VASAPPAVPSQP) are compositionally biased toward pro residues. The disordered stretch occupies residues 328–349 (VASAPPAVPSQPPEYSSVFPPV).

The protein localises to the host membrane. This is an uncharacterized protein from Human cytomegalovirus (strain Merlin) (HHV-5).